The sequence spans 134 residues: Natriuretic peptides B (134 aa).

An N-terminal signal peptide occupies residues 1-26 (MDPQTAPSRALLLLLFLHLAFLGGRS). The O-linked (Xyl...) (chondroitin sulfate) serine glycan is linked to Ser-41. The O-linked (HexNAc...) threonine; Partial glycan is linked to Thr-62. Residues Ser-63 and Ser-70 are each glycosylated (O-linked (HexNAc...) serine). The O-linked (HexNAc...) threonine glycan is linked to Thr-74. O-linked (HexNAc...) serine glycosylation is present at Ser-79. Thr-84 carries an O-linked (HexNAc...) threonine; Partial glycan. An O-linked (HexNAc...) threonine glycan is attached at Thr-97. Cysteines 112 and 128 form a disulfide.

This sequence belongs to the natriuretic peptide family. Post-translationally, the precursor molecule is proteolytically cleaved by the endoproteases FURIN or CORIN at Arg-102 to produce brain natriuretic peptide 32 and NT-proBNP. This likely occurs after it has been secreted into the blood, either during circulation or in the target cells. CORIN also cleaves the precursor molecule at additional residues including Arg-99 and possibly Lys-105. In patients with heart failure, processing and degradation of natriuretic peptides B occurs but is delayed, possibly due to a decrease in enzyme level or activity of CORIN and DPP4. Undergoes further proteolytic cleavage by various proteases such as DPP4, MME and possibly FAP, to give rise to a variety of shorter peptides. Cleaved at Pro-104 by the prolyl endopeptidase FAP (seprase) activity (in vitro). Degraded by IDE. During IDE degradation, the resulting products initially increase the activation of NPR1 and can also stimulate NPR2 to produce cGMP before the fragments are completely degraded and inactivated by IDE (in vitro). In terms of processing, O-glycosylated on at least seven residues. In cardiomyocytes, glycosylation at Thr-97 is essential for the stability and processing of the extracellular natriuretic peptides B. Glycosylation, especially at Thr-97, may also be important for brain natriuretic peptide 32 stability and/or extracellular distribution. Glycosylation at Thr-97 appears to inhibit FURIN- or CORIN-mediated proteolytic processing, at least in HEK293 cells. In terms of tissue distribution, detected in the cardiac atria (at protein level). Detected in the kidney distal tubular cells (at protein level).

It localises to the secreted. Cardiac hormone that plays a key role in mediating cardio-renal homeostasis. May also function as a paracrine antifibrotic factor in the heart. Acts by specifically binding and stimulating NPR1 to produce cGMP, which in turn activates effector proteins that drive various biological responses. Involved in regulating the extracellular fluid volume and maintaining the fluid-electrolyte balance through natriuresis, diuresis, vasorelaxation, and inhibition of renin and aldosterone secretion. Binds the clearance receptor NPR3. In terms of biological role, may affect cardio-renal homeostasis. Able to promote the production of cGMP although its potency is very low compared to brain natriuretic peptide 32. Functionally, may have a role in cardio-renal homeostasis. Able to promote the production of cGMP. This is Natriuretic peptides B (NPPB) from Homo sapiens (Human).